The chain runs to 377 residues: tRNA-specific 2-thiouridylase MnmA (377 aa).

Residues 18–25 (GMSGGVDS) and methionine 44 contribute to the ATP site. The tract at residues 104–106 (NPD) is interaction with target base in tRNA. Residue cysteine 109 is the Nucleophile of the active site. Cysteine 109 and cysteine 209 are disulfide-bonded. Position 134 (glycine 134) interacts with ATP. Residues 159–161 (KDQ) are interaction with tRNA. The active-site Cysteine persulfide intermediate is the cysteine 209. Positions 324–325 (RY) are interaction with tRNA.

It belongs to the MnmA/TRMU family.

It localises to the cytoplasm. It carries out the reaction S-sulfanyl-L-cysteinyl-[protein] + uridine(34) in tRNA + AH2 + ATP = 2-thiouridine(34) in tRNA + L-cysteinyl-[protein] + A + AMP + diphosphate + H(+). Catalyzes the 2-thiolation of uridine at the wobble position (U34) of tRNA, leading to the formation of s(2)U34. This is tRNA-specific 2-thiouridylase MnmA from Photobacterium profundum (strain SS9).